Here is a 297-residue protein sequence, read N- to C-terminus: MMDSEAHEKRPPILTSSKQDISPHITNVGEMKHYLCGCCAAFNNVAITFPIQKVLFRQQLYGIKTRDAILQLRRDGFRNLYRGILPPLMQKTTTLALMFGLYEDLSCLLHKHVSAPEFATSGVAAVLAGTTEAIFTPLERVQTLLQDHKHHDKFTNTYQAFKALKCHGIGEYYRGLVPILFRNGLSNVLFFGLRGPIKEHLPTATTHSAHLVNDFICGGLLGAMLGFLFFPINVVKTRIQSQIGGEFQSFPKVFQKIWLERDRKLINLFRGAHLNYHRSLISWGIINATYEFLLKVI.

A compositionally biased stretch (basic and acidic residues) spans 1–11 (MMDSEAHEKRP). The interval 1 to 20 (MMDSEAHEKRPPILTSSKQD) is disordered. 3 Solcar repeats span residues 28–108 (VGEM…LSCL), 116–200 (PEFA…IKEH), and 213–296 (NDFI…LLKV). Helical transmembrane passes span 36–56 (CGCCAAFNNVAITFPIQKVLF), 85–105 (LPPLMQKTTTLALMFGLYEDL), 116–135 (PEFATSGVAAVLAGTTEAIF), 179–199 (ILFRNGLSNVLFFGLRGPIKE), 215–235 (FICGGLLGAMLGFLFFPINVV), and 268–289 (LFRGAHLNYHRSLISWGIINAT).

The protein belongs to the mitochondrial carrier (TC 2.A.29) family.

Its subcellular location is the mitochondrion inner membrane. The enzyme catalyses NAD(+)(in) = NAD(+)(out). Functionally, mitochondrial membrane carrier protein that mediates the import of NAD(+) into mitochondria. Mitochondrial NAD(+) is required for glycolysis and mitochondrial respiration. Compared to SLC25A52, SLC25A51-mediated transport is essential for the import of NAD(+) in mitochondria. The transport mechanism, uniport or antiport, its electrogenicity and substrate selectivity, remain to be elucidated. This Homo sapiens (Human) protein is Mitochondrial nicotinamide adenine dinucleotide transporter SLC25A51.